Consider the following 296-residue polypeptide: 4-hydroxybenzoate octaprenyltransferase (296 aa).

Helical transmembrane passes span 28–48 (PIGI…AGKG), 52–72 (LKTV…GCVI), 102–122 (ALAL…FTNA), 146–166 (YYPQ…AFTA), 169–189 (GDLP…TVGY), 219–239 (VIIL…GARF), 241–261 (LGAC…WEFW), and 275–295 (FLHN…DYAV).

The protein belongs to the UbiA prenyltransferase family. It depends on Mg(2+) as a cofactor.

It localises to the cell inner membrane. It catalyses the reaction all-trans-octaprenyl diphosphate + 4-hydroxybenzoate = 4-hydroxy-3-(all-trans-octaprenyl)benzoate + diphosphate. Its pathway is cofactor biosynthesis; ubiquinone biosynthesis. Catalyzes the prenylation of para-hydroxybenzoate (PHB) with an all-trans polyprenyl group. Mediates the second step in the final reaction sequence of ubiquinone-8 (UQ-8) biosynthesis, which is the condensation of the polyisoprenoid side chain with PHB, generating the first membrane-bound Q intermediate 3-octaprenyl-4-hydroxybenzoate. The chain is 4-hydroxybenzoate octaprenyltransferase from Pseudomonas savastanoi pv. phaseolicola (strain 1448A / Race 6) (Pseudomonas syringae pv. phaseolicola (strain 1448A / Race 6)).